The chain runs to 148 residues: Fibroblast growth factor 1 (148 aa).

A propeptide spanning residues 1–11 (EITTFAALTER) is cleaved from the precursor. Asparagine 29 serves as a coordination point for heparin. Positions 123–139 (KKNGKTKLGSRTHFGQK) are heparin-binding.

Belongs to the heparin-binding growth factors family.

It localises to the secreted. The protein localises to the cytoplasm. The protein resides in the cell cortex. It is found in the cytosol. Its subcellular location is the nucleus. In terms of biological role, plays an important role in the regulation of cell survival, cell division, angiogenesis, cell differentiation and cell migration. Functions as a potent mitogen in vitro. Acts as a ligand for FGFR1 and integrins. Binds to FGFR1 in the presence of heparin leading to FGFR1 dimerization and activation via sequential autophosphorylation on tyrosine residues which act as docking sites for interacting proteins, leading to the activation of several signaling cascades. Binds to integrins. Its binding to integrins and subsequent ternary complex formation with integrins and FGFR1 are essential for FGF1 signaling. This chain is Fibroblast growth factor 1 (fgf1), found in Cynops pyrrhogaster (Japanese fire-bellied newt).